Reading from the N-terminus, the 304-residue chain is Dihydroorotate dehydrogenase B (NAD(+)), catalytic subunit (304 aa).

Residues Ser-21 and 45–46 (KA) each bind FMN. Substrate is bound by residues Lys-45 and 69-73 (NAIGL). Asn-99 and Asn-127 together coordinate FMN. Asn-127 lines the substrate pocket. The active-site Nucleophile is Cys-130. FMN-binding residues include Lys-165 and Ile-191. A substrate-binding site is contributed by 192–193 (NT). Residues Gly-217, 243–244 (GG), and 265–266 (GT) each bind FMN.

The protein belongs to the dihydroorotate dehydrogenase family. Type 1 subfamily. As to quaternary structure, heterotetramer of 2 PyrK and 2 PyrD type B subunits. FMN serves as cofactor.

The protein resides in the cytoplasm. The catalysed reaction is (S)-dihydroorotate + NAD(+) = orotate + NADH + H(+). It functions in the pathway pyrimidine metabolism; UMP biosynthesis via de novo pathway; orotate from (S)-dihydroorotate (NAD(+) route): step 1/1. Functionally, catalyzes the conversion of dihydroorotate to orotate with NAD(+) as electron acceptor. This chain is Dihydroorotate dehydrogenase B (NAD(+)), catalytic subunit (pyrD), found in Listeria welshimeri serovar 6b (strain ATCC 35897 / DSM 20650 / CCUG 15529 / CIP 8149 / NCTC 11857 / SLCC 5334 / V8).